The following is a 678-amino-acid chain: GAS2-like protein 1 (678 aa).

The residue at position 2 (Ala2) is an N-acetylalanine. The Calponin-homology (CH) domain occupies 27-148 (EAMKEDLADW…CLLEVARRGA (122 aa)). The GAR domain maps to 203 to 275 (NDLRNLDELV…HYLDKHDPCR (73 aa)). A compositionally biased stretch (polar residues) spans 276–291 (CSSSTHRLPQQRTGTF). 2 disordered regions span residues 276–524 (CSSS…FRRL) and 538–678 (AASH…DSSM). 2 positions are modified to phosphoserine: Ser306 and Ser316. Over residues 327–340 (GTKEGPETPLRPRD) the composition is skewed to basic and acidic residues. Position 334 is a phosphothreonine (Thr334). Residues Ser352 and Ser355 each carry the phosphoserine modification. Positions 354–365 (DSDSSASSAQSG) are enriched in low complexity. The span at 370-381 (RSDDSATGSRRE) shows a compositional bias: basic and acidic residues. The segment covering 392-403 (PASPRRPTAPRS) has biased composition (low complexity). Ser394 carries the phosphoserine modification. The span at 404 to 413 (QSRDRLDRGR) shows a compositional bias: basic and acidic residues. Residues Ser436 and Ser438 each carry the phosphoserine modification. Basic and acidic residues predominate over residues 437–454 (QSREEQAVLMVRRDRDGQ). Positions 461–471 (GRGGGGSGGSG) are enriched in gly residues. A phosphoserine mark is found at Ser482 and Ser489. Pro residues predominate over residues 485 to 495 (APRPSRGPSPG). Arg490 carries the post-translational modification Omega-N-methylarginine. Ser493 is modified (phosphoserine). Residue Thr501 is modified to Phosphothreonine. Arg507 is modified (omega-N-methylarginine). Composition is skewed to low complexity over residues 509–519 (PLQLDPQQEQQ) and 554–568 (DSAYCSSSSSSSSLS). Arg630 is subject to Omega-N-methylarginine. Basic and acidic residues predominate over residues 631–641 (GRMDTQPDRKP). Ser654 carries the post-translational modification Phosphoserine. A compositionally biased stretch (polar residues) spans 666–678 (HSVTPRTEPDSSM).

Belongs to the GAS2 family. Interacts with MAPRE1.

The protein localises to the cytoplasm. It localises to the cytoskeleton. It is found in the stress fiber. In terms of biological role, seems to be involved in the cross-linking of microtubules and microfilaments. Regulates microtubule dynamics and stability by interacting with microtubule plus-end tracking proteins, such as MAPRE1, to regulate microtubule growth along actin stress fibers. This chain is GAS2-like protein 1 (Gas2l1), found in Mus musculus (Mouse).